Here is a 389-residue protein sequence, read N- to C-terminus: Pregnancy-associated glycoprotein 1 (389 aa).

The signal sequence occupies residues Met1–Cys15. Residues Tyr76–Arg386 enclose the Peptidase A1 domain. N-linked (GlcNAc...) asparagine glycosylation occurs at Asn79. The active site involves Asp94. Residues Cys107 and Cys112 are joined by a disulfide bond. N-linked (GlcNAc...) asparagine glycosylation is present at Asn130. An intrachain disulfide couples Cys268 to Cys272. The active site involves Asp277. A disulfide bond links Cys311 and Cys345. Asn348 is a glycosylation site (N-linked (GlcNAc...) asparagine).

The protein belongs to the peptidase A1 family. In terms of tissue distribution, expressed throughout the chorion, with the signal localized exclusively over the trophectoderm.

It localises to the secreted. It is found in the extracellular space. Its function is as follows. Appears to be proteolytically inactive. The protein is Pregnancy-associated glycoprotein 1 of Sus scrofa (Pig).